Consider the following 4730-residue polypeptide: Dynein heavy chain, cytoplasmic (4730 aa).

Disordered regions lie at residues 1–23 (MEDQ…VVTP) and 91–120 (TINS…QQQS). The stem stretch occupies residues 1–1935 (MEDQQINVDS…VIHMANATFY (1935 aa)). The span at 10-23 (SPTSGTNTPPVVTP) shows a compositional bias: low complexity. Residues 867 to 900 (VRKLSTSINNFRDKVDDLIVKYSEIKKQLDGLKS) are a coiled coil. Residues 964–1016 (EDQKDSQSTSGSSNKGGKLNRMNYSIRNKSDEENSSDLTQPQQSQQQQQTISI) form a disordered region. Residues 969 to 978 (SQSTSGSSNK) show a composition bias toward polar residues. Residues 1002-1016 (TQPQQSQQQQQTISI) show a composition bias toward low complexity. 4 coiled-coil regions span residues 1204 to 1224 (EKMN…EKLS), 1343 to 1372 (ALET…QALD), 1425 to 1441 (RKVR…LKNL), and 1661 to 1689 (AIER…YLER). AAA regions lie at residues 1936–2158 (YGFE…VLVS), 2238–2531 (KKIQ…FTRL), 2635–2885 (EVET…WDRA), and 2978–3252 (VFYE…QGRQ). ATP is bound at residue 1974–1981 (GPAGTGKT). Positions 2231-2253 (IQMDQLRKKIQEIAKQRHLVTKQ) form a coiled coil. Residue 2276 to 2283 (GPSGGGKT) coordinates ATP. Positions 2437 to 2486 (EPFDPQEKEQQKRNENAQLQQQQQTTITSPILTSPPTTSSSSRSTTSTTS) are disordered. Basic and acidic residues predominate over residues 2441 to 2451 (PQEKEQQKRNE). Residues 2442-2462 (QEKEQQKRNENAQLQQQQQTT) are a coiled coil. A compositionally biased stretch (low complexity) spans 2454-2486 (QLQQQQQTTITSPILTSPPTTSSSSRSTTSTTS). ATP-binding positions include 2674 to 2681 (GPPGSGKT) and 3016 to 3023 (GVSGGGKS). 3 coiled-coil regions span residues 3271–3349 (INEK…VQLD), 3483–3585 (AQTY…NTQM), and 3854–3881 (TLET…EISE). Residues 3271-3585 (INEKRDQLEE…QQSENFNTQM (315 aa)) are stalk. AAA stretches follow at residues 3638 to 3867 (LSKP…EIAL) and 4098 to 4312 (SHSF…SIDY). Residues 4432 to 4465 (KMQSSEEDGEDDQVSGSSKKESSSSSSEDKGKAK) are disordered. Residues 4449 to 4463 (SKKESSSSSSEDKGK) are compositionally biased toward basic and acidic residues.

It belongs to the dynein heavy chain family. As to quaternary structure, consists of at least two heavy chains and a number of intermediate and light chains.

The protein localises to the cytoplasm. Its subcellular location is the cytoskeleton. Its function is as follows. Cytoplasmic dynein acts as a motor for the intracellular retrograde motility of vesicles and organelles along microtubules. Dynein has ATPase activity; the force-producing power stroke is thought to occur on release of ADP. This chain is Dynein heavy chain, cytoplasmic (dhcA), found in Dictyostelium discoideum (Social amoeba).